The sequence spans 77 residues: Acyl carrier protein homolog (77 aa).

A Carrier domain is found at Met1–Leu76. Ser36 carries the O-(pantetheine 4'-phosphoryl)serine modification.

In terms of processing, 4'-phosphopantetheine is transferred from CoA to a specific serine of the apo-ACP-like protein.

It functions in the pathway lipid metabolism; fatty acid biosynthesis. Functionally, carrier of the growing fatty acid chain in fatty acid biosynthesis. The polypeptide is Acyl carrier protein homolog (Ureaplasma parvum serovar 3 (strain ATCC 700970)).